Reading from the N-terminus, the 168-residue chain is Lipoprotein signal peptidase (168 aa).

The next 3 membrane-spanning stretches (helical) occupy residues 12 to 32 (WYWV…WVLA), 67 to 87 (WQRW…TIWL), and 93 to 113 (NMVR…GNLI). Active-site residues include aspartate 123 and aspartate 141. The helical transmembrane segment at 136–156 (AFNIADAAIFIGAVLIIIDSF) threads the bilayer.

It belongs to the peptidase A8 family.

It localises to the cell inner membrane. The enzyme catalyses Release of signal peptides from bacterial membrane prolipoproteins. Hydrolyzes -Xaa-Yaa-Zaa-|-(S,diacylglyceryl)Cys-, in which Xaa is hydrophobic (preferably Leu), and Yaa (Ala or Ser) and Zaa (Gly or Ala) have small, neutral side chains.. Its pathway is protein modification; lipoprotein biosynthesis (signal peptide cleavage). In terms of biological role, this protein specifically catalyzes the removal of signal peptides from prolipoproteins. The polypeptide is Lipoprotein signal peptidase (Shewanella amazonensis (strain ATCC BAA-1098 / SB2B)).